The following is a 1364-amino-acid chain: Kinectin (1364 aa).

Over 1-6 (MEFYES) the chain is Cytoplasmic. Residues 7–29 (TYFIILIPSVVITVIFLFFWLFM) traverse the membrane as a helical; Signal-anchor for type II membrane protein segment. Over 30–1364 (KETLYDEVLA…KGREHYQLVE (1335 aa)) the chain is Lumenal. 4 stretches are compositionally biased toward basic and acidic residues: residues 46–56 (KFPPTKSDKKK), 73–86 (HESD…DFKL), 121–135 (QKAA…ESEG), and 170–179 (QKNDDQDTKT). Residues 46 to 207 (KFPPTKSDKK…VKQENVSGKK (162 aa)) are disordered. 10 N-linked (GlcNAc...) asparagine glycosylation sites follow: asparagine 202, asparagine 267, asparagine 623, asparagine 638, asparagine 704, asparagine 775, asparagine 976, asparagine 1061, asparagine 1088, and asparagine 1094. The stretch at 315–1085 (KASKAESAAA…VETRELLQKL (771 aa)) forms a coiled coil. Residues 1116 to 1306 (SGSEDIKVME…ASLEREIGKV (191 aa)) are a coiled coil.

This sequence belongs to the kinectin family. In terms of assembly, parallel homodimers formed between the membrane-bound and the cytosolic form, and also between 2 cytosolic forms. In terms of processing, both the membrane and cytoplasmic forms seem to be myristoylated.

It localises to the endoplasmic reticulum membrane. Functionally, receptor for kinesin thus involved in kinesin-driven vesicle motility. This chain is Kinectin (KTN1), found in Gallus gallus (Chicken).